Here is a 250-residue protein sequence, read N- to C-terminus: Ditrans,polycis-undecaprenyl-diphosphate synthase ((2E,6E)-farnesyl-diphosphate specific) (250 aa).

Residue aspartate 20 is part of the active site. Aspartate 20 serves as a coordination point for Mg(2+). Substrate is bound by residues 21-24, tryptophan 25, arginine 33, histidine 37, and 65-67; these read GNGR and SSE. Catalysis depends on asparagine 68, which acts as the Proton acceptor. Substrate contacts are provided by residues tryptophan 69, arginine 71, arginine 188, and 194–196; that span reads RIS. Residue glutamate 207 coordinates Mg(2+).

Belongs to the UPP synthase family. In terms of assembly, homodimer. Requires Mg(2+) as cofactor.

It catalyses the reaction 8 isopentenyl diphosphate + (2E,6E)-farnesyl diphosphate = di-trans,octa-cis-undecaprenyl diphosphate + 8 diphosphate. Catalyzes the sequential condensation of isopentenyl diphosphate (IPP) with (2E,6E)-farnesyl diphosphate (E,E-FPP) to yield (2Z,6Z,10Z,14Z,18Z,22Z,26Z,30Z,34E,38E)-undecaprenyl diphosphate (di-trans,octa-cis-UPP). UPP is the precursor of glycosyl carrier lipid in the biosynthesis of bacterial cell wall polysaccharide components such as peptidoglycan and lipopolysaccharide. The chain is Ditrans,polycis-undecaprenyl-diphosphate synthase ((2E,6E)-farnesyl-diphosphate specific) from Vibrio cholerae serotype O1 (strain ATCC 39315 / El Tor Inaba N16961).